The following is a 157-amino-acid chain: Protein E6 (157 aa).

Zinc fingers lie at residues 41-77 and 114-150; these read CNFC…CRVC and CQTC…CRQC.

Belongs to the papillomaviridae E6 protein family. Forms homodimers. Interacts with ubiquitin-protein ligase UBE3A/E6-AP; this interaction stimulates UBE3A ubiquitin activity. Interacts with host BAK1.

Its subcellular location is the host cytoplasm. It is found in the host nucleus. Plays a major role in the induction and maintenance of cellular transformation. E6 associates with host UBE3A/E6-AP ubiquitin-protein ligase and modulates its activity. Protects host keratinocytes from apoptosis by mediating the degradation of host BAK1. May also inhibit host immune response. In Human papillomavirus type 5b, this protein is Protein E6.